Reading from the N-terminus, the 69-residue chain is Cytochrome c oxidase copper chaperone (69 aa).

The Cu cation site is built by Cys23 and Cys24. The 43-residue stretch at 23-65 folds into the CHCH domain; the sequence is CCVCKPEKEERDTCILFNGQDSEKCKEFIEKYKECMKGYGFEV. Short sequence motifs (cx9C motif) lie at residues 26–36 and 47–57; these read CKPEKEERDTC and CKEFIEKYKEC. Intrachain disulfides connect Cys26–Cys57 and Cys36–Cys47.

It belongs to the COX17 family.

It is found in the mitochondrion intermembrane space. Copper chaperone for cytochrome c oxidase (COX). Binds two copper ions and deliver them to the Cu(A) site of COX. This is Cytochrome c oxidase copper chaperone (COX17) from Saccharomyces cerevisiae (strain ATCC 204508 / S288c) (Baker's yeast).